The sequence spans 505 residues: ATP synthase subunit beta (505 aa).

157 to 164 is an ATP binding site; the sequence is GGAGVGKT.

It belongs to the ATPase alpha/beta chains family. In terms of assembly, F-type ATPases have 2 components, CF(1) - the catalytic core - and CF(0) - the membrane proton channel. CF(1) has five subunits: alpha(3), beta(3), gamma(1), delta(1), epsilon(1). CF(0) has three main subunits: a(1), b(2) and c(9-12). The alpha and beta chains form an alternating ring which encloses part of the gamma chain. CF(1) is attached to CF(0) by a central stalk formed by the gamma and epsilon chains, while a peripheral stalk is formed by the delta and b chains.

Its subcellular location is the cell inner membrane. The enzyme catalyses ATP + H2O + 4 H(+)(in) = ADP + phosphate + 5 H(+)(out). In terms of biological role, produces ATP from ADP in the presence of a proton gradient across the membrane. The catalytic sites are hosted primarily by the beta subunits. The sequence is that of ATP synthase subunit beta from Bacteroides thetaiotaomicron (strain ATCC 29148 / DSM 2079 / JCM 5827 / CCUG 10774 / NCTC 10582 / VPI-5482 / E50).